A 146-amino-acid polypeptide reads, in one-letter code: MARVRHKRKPVAEMNVVPYIDVMLVLLVIFMVTAPMLNQGVKVDLPKVSSEALPQDNNKQVLTLSVKADGSYYWNVGSEVDTEKQTDSAVSLEQMTDAVTKIMSARPDTQVFIRGDKAVNYGAVVGAMGALQQAGVPNVGLITEAP.

Residues 16–36 (VVPYIDVMLVLLVIFMVTAPM) traverse the membrane as a helical segment.

This sequence belongs to the ExbD/TolR family. The Tol-Pal system is composed of five core proteins: the inner membrane proteins TolA, TolQ and TolR, the periplasmic protein TolB and the outer membrane protein Pal. They form a network linking the inner and outer membranes and the peptidoglycan layer.

The protein localises to the cell inner membrane. In terms of biological role, part of the Tol-Pal system, which plays a role in outer membrane invagination during cell division and is important for maintaining outer membrane integrity. This Pseudomonas aeruginosa (strain ATCC 15692 / DSM 22644 / CIP 104116 / JCM 14847 / LMG 12228 / 1C / PRS 101 / PAO1) protein is Tol-Pal system protein TolR.